A 146-amino-acid polypeptide reads, in one-letter code: Ribosome maturation factor RimP (146 aa).

This sequence belongs to the RimP family.

The protein localises to the cytoplasm. Its function is as follows. Required for maturation of 30S ribosomal subunits. In Helicobacter pylori (strain ATCC 700392 / 26695) (Campylobacter pylori), this protein is Ribosome maturation factor RimP.